The following is a 486-amino-acid chain: Virulence sensor protein PhoQ (486 aa).

At 1–16 the chain is on the cytoplasmic side; the sequence is MKKLLRLFFPLSLRVR. A helical membrane pass occupies residues 17 to 37; sequence FLLATAAVVLVLSLAYGMVAL. The Periplasmic portion of the chain corresponds to 38 to 194; sequence IGYSVSFDKT…LKSSYMVWSW (157 aa). A divalent metal cation contacts are provided by Asp-151 and Asp-152. The helical transmembrane segment at 195–215 threads the bilayer; sequence FIYVLSANLLLVIPLLWVAAW. The 52-residue stretch at 215–266 folds into the HAMP domain; that stretch reads WWSLRPIEALAKEVRELEEHNRELLNPATTRELTSLVRNLNRLLKSERERYD. Over 216–486 the chain is Cytoplasmic; it reads WSLRPIEALA…GRQHSAPKDE (271 aa). Residues 274–480 enclose the Histidine kinase domain; the sequence is DLTHSLKTPL…RMEVIFGRQH (207 aa). A Phosphohistidine; by autocatalysis modification is found at His-277. Residue Asn-385 coordinates Mg(2+). Residues 385–393, 415–420, and 434–446 each bind ATP; these read NVLDNACKY, DDGPGI, and RVDTLRPGQGVGL. Residue Gln-442 coordinates Mg(2+).

In terms of assembly, homodimer.

Its subcellular location is the cell inner membrane. It catalyses the reaction ATP + protein L-histidine = ADP + protein N-phospho-L-histidine.. Member of the two-component regulatory system PhoP/PhoQ involved in virulence and adaptation to low Mg(2+) environments. In low periplasmic Mg(2+), PhoQ functions as a membrane-associated protein kinase that undergoes autophosphorylation and subsequently transfers the phosphate to PhoP, which results in the expression of PhoP-activated genes (PAG) and repression of PhoP-repressed genes (PRG). In high periplasmic Mg(2+), acts as a protein phosphatase that dephosphorylates phospho-PhoP, which results in the repression of PAG and may lead to expression of some PRG. Necessary for resistance to killing by polymorphonuclear leukocytes (PMNs) and cationic antimicrobial peptides (CAMP) they produce. The protein is Virulence sensor protein PhoQ (phoQ) of Shigella flexneri.